The primary structure comprises 2684 residues: Teneurin-1 (2684 aa).

3 disordered regions span residues 1-37 (MFQH…HDYT), 127-156 (TTSS…PTYS), and 170-204 (GTNQ…KKFD). The Cytoplasmic portion of the chain corresponds to 1-216 (MFQHRTTNAQ…SDTCSRWPSK (216 aa)). The span at 11–24 (GPPPNRPMPRPPAG) shows a compositional bias: pro residues. Residues 127-136 (TTSSTLSPAS) show a composition bias toward low complexity. A helical membrane pass occupies residues 217 to 237 (WNILLAAALLVALFVICILLF). The Extracellular segment spans residues 238 to 2684 (RAPNYVYTQP…VHSWKFRKSE (2447 aa)). 2 EGF-like domains span residues 463 to 499 (TGRT…KECE) and 501 to 534 (RHNW…EACE). 6 disulfide bridges follow: Cys-467/Cys-476, Cys-472/Cys-487, Cys-489/Cys-498, Cys-505/Cys-516, Cys-510/Cys-522, and Cys-524/Cys-533. The tract at residues 576–614 (PQAQSPPRRGQEPTESSKTRKAQVKPTPTSEKKKESREL) is disordered. Composition is skewed to basic and acidic residues over residues 584–593 (RGQEPTESSK) and 605–614 (SEKKKESREL). 2 EGF-like domains span residues 650–684 (DSVD…SNCT) and 716–753 (AIDG…VDCS). 6 disulfides stabilise this stretch: Cys-654–Cys-666, Cys-659–Cys-672, Cys-674–Cys-683, Cys-720–Cys-730, Cys-724–Cys-741, and Cys-743–Cys-752. NHL repeat units follow at residues 1276-1317 (DSCG…IDTT), 1334-1378 (RTCA…VVHD), 1398-1441 (SASA…VRKL), and 1470-1513 (AVSL…VSAR).

The protein belongs to the tenascin family. Teneurin subfamily. In terms of processing, probably proteolytically processed to generate a N-terminal intracellular domain. In terms of tissue distribution, isoform 1 is mainly expressed in organs derived from the mesoderm, including the pharynx, vulva muscles, gonad distal tip cells, intestine and several tail neurons. Isoform 2 is mainly expressed in the organs derived from the ectoderm, including hypodermal cells, head ganglion neurons and tail neurons (at protein level).

The protein localises to the nucleus. The protein resides in the cell membrane. It is found in the membrane. Plays a role in the gonadal basement membrane maintenance and/or adhesion early in development. Contributes to the guidance of pharyngeal neurons. This Caenorhabditis elegans protein is Teneurin-1 (ten-1).